We begin with the raw amino-acid sequence, 149 residues long: NADH-quinone oxidoreductase subunit A (149 aa).

3 helical membrane passes run 16 to 36 (FAVF…GAFF), 68 to 88 (FYLV…LYAW), and 98 to 118 (LGFI…FYLV).

The protein belongs to the complex I subunit 3 family. As to quaternary structure, NDH-1 is composed of 13 different subunits. Subunits NuoA, H, J, K, L, M, N constitute the membrane sector of the complex.

It is found in the cell inner membrane. It catalyses the reaction a quinone + NADH + 5 H(+)(in) = a quinol + NAD(+) + 4 H(+)(out). NDH-1 shuttles electrons from NADH, via FMN and iron-sulfur (Fe-S) centers, to quinones in the respiratory chain. The immediate electron acceptor for the enzyme in this species is believed to be ubiquinone. Couples the redox reaction to proton translocation (for every two electrons transferred, four hydrogen ions are translocated across the cytoplasmic membrane), and thus conserves the redox energy in a proton gradient. The chain is NADH-quinone oxidoreductase subunit A from Photorhabdus laumondii subsp. laumondii (strain DSM 15139 / CIP 105565 / TT01) (Photorhabdus luminescens subsp. laumondii).